Here is a 70-residue protein sequence, read N- to C-terminus: Small ribosomal subunit protein bS21 (70 aa).

This sequence belongs to the bacterial ribosomal protein bS21 family.

In Neisseria gonorrhoeae (strain ATCC 700825 / FA 1090), this protein is Small ribosomal subunit protein bS21.